The primary structure comprises 309 residues: Probable 2,4-dienoyl-CoA reductase decr-1.2 [(3E)-enoyl-CoA-producing] (309 aa).

Residues 28 to 60 (VLVTGGGTGIGKAIATTFAHLRATVVIAARRME), 32 to 37 (GGGTGI), R57, and D83 each bind NADP(+). Residue R57 participates in substrate binding. 2 residues coordinate substrate: F116 and S124. Catalysis depends on Y166, which acts as the Proton acceptor. NADP(+)-binding positions include K181 and 207–210 (PGPI). R218 serves as a coordination point for substrate.

The protein belongs to the short-chain dehydrogenases/reductases (SDR) family. 2,4-dienoyl-CoA reductase subfamily.

The catalysed reaction is a (2E,4E)-dienoyl-CoA + NADPH + H(+) = a 4,5-saturated-(3E)-enoyl-CoA + NADP(+). The enzyme catalyses a (2E,4Z)-dienoyl-CoA + NADPH + H(+) = a 4,5-saturated-(3E)-enoyl-CoA + NADP(+). Its function is as follows. Auxiliary enzyme of beta-oxidation. It participates in the metabolism of unsaturated fatty enoyl-CoA esters having double bonds in both even- and odd-numbered positions. Catalyzes the NADP-dependent reduction of 2,4-dienoyl-CoA to yield trans-3-enoyl-CoA. The sequence is that of Probable 2,4-dienoyl-CoA reductase decr-1.2 [(3E)-enoyl-CoA-producing] from Caenorhabditis elegans.